Consider the following 936-residue polypeptide: Protocadherin alpha-5 (936 aa).

The N-terminal stretch at 1–28 (MVYSRRGSLGSRLLLLWLLLAYWKAGSG) is a signal peptide. Residues 29–696 (QLHYSIPEEA…GPEAALVDVN (668 aa)) lie on the Extracellular side of the membrane. 6 Cadherin domains span residues 33-132 (SIPE…PPRF), 156-241 (ASDL…APEF), 242-349 (DKSI…TPEM), 350-454 (AITT…LRAF), 455-564 (AQPQ…APAL), and 580-677 (VPRS…APKA). Residues Asn264, Asn448, and Asn547 are each glycosylated (N-linked (GlcNAc...) asparagine). Residues 697–717 (VYLIIAICAVSSLLVLTLLLY) traverse the membrane as a helical segment. The Cytoplasmic segment spans residues 718–936 (TALRCSAQPT…GNSTTDNSDQ (219 aa)). Disordered regions lie at residues 759–793 (SGEA…PDWR), 815–875 (RAGP…DKFI), and 887–936 (QEPA…NSDQ). PXXP repeat units follow at residues 773-776 (PSLP), 785-788 (PRQP), 818-821 (PGGP), 873-876 (KFII), and 877-890 (PGSP…QEPA). The 5 X 4 AA repeats of P-X-X-P stretch occupies residues 773–890 (PSLPQGPTST…AIISIRQEPA (118 aa)). Positions 774–786 (SLPQGPTSTDNPR) are enriched in polar residues. Over residues 895–909 (DKSDFITFGKKEETK) the composition is skewed to basic and acidic residues.

It localises to the cell membrane. Its function is as follows. Potential calcium-dependent cell-adhesion protein. May be involved in the establishment and maintenance of specific neuronal connections in the brain. In Pan troglodytes (Chimpanzee), this protein is Protocadherin alpha-5 (PCDHA5).